We begin with the raw amino-acid sequence, 313 residues long: Small glutamine-rich tetratricopeptide repeat-containing protein alpha (313 aa).

Residues 66–100 (ATGKEMPQDLRSPARTPPSEEDSAEAERLKTEGNE) are disordered. Position 77 is a phosphoserine (Ser-77). Thr-81 carries the phosphothreonine modification. A Phosphoserine modification is found at Ser-84. Basic and acidic residues predominate over residues 90–100 (EAERLKTEGNE). 3 TPR repeats span residues 91–124 (AERL…NPAN), 125–158 (AVYF…DPAY), and 159–192 (SKAY…DPDN). The residue at position 137 (Lys-137) is an N6-acetyllysine. The segment at 250–269 (MISGGNNPLGTPGTSPSQND) is disordered. Phosphoserine is present on Ser-301. Phosphothreonine is present on Thr-303. Ser-305 is modified (phosphoserine).

It belongs to the SGT family. In terms of assembly, homodimer. Homooligomer. Interacts with DNAJC5 and DNAJC5B. Interacts (via TPR repeats) with HSP90AA1. Interacts (via Gln-rich region) with SLC2A1. Interacts with HSP90AB1. Interacts (via TPR repeats) with HSPA8/Hsc70; the interaction is direct. Interacts with BAG6 (via ubiquitin-like domain); interaction prevents interaction between BAG6 and RNF126. Forms a multiprotein complex, at least composed of DNAJB12, DNAJB14, HSPA8/Hsc70 and SGTA; interaction with DNAJB14 and HSPA8/Hsc70 is direct. (Microbial infection) Interacts with Vpu and Gag from HIV-1. As to quaternary structure, (Microbial infection) Interacts with SARS-CoV accessory protein 7a. As to expression, ubiquitous.

The protein localises to the cytoplasm. Its subcellular location is the nucleus. Functionally, co-chaperone that binds misfolded and hydrophobic patches-containing client proteins in the cytosol. Mediates their targeting to the endoplasmic reticulum but also regulates their sorting to the proteasome when targeting fails. Functions in tail-anchored/type II transmembrane proteins membrane insertion constituting with ASNA1 and the BAG6 complex a targeting module. Functions upstream of the BAG6 complex and ASNA1, binding more rapidly the transmembrane domain of newly synthesized proteins. It is also involved in the regulation of the endoplasmic reticulum-associated misfolded protein catabolic process via its interaction with BAG6: collaborates with the BAG6 complex to maintain hydrophobic substrates in non-ubiquitinated states. Competes with RNF126 for interaction with BAG6, preventing the ubiquitination of client proteins associated with the BAG6 complex. Binds directly to HSC70 and HSP70 and regulates their ATPase activity. In terms of biological role, (Microbial infection) In case of infection by polyomavirus, involved in the virus endoplasmic reticulum membrane penetration and infection via interaction with DNAJB12, DNAJB14 and HSPA8/Hsc70. The sequence is that of Small glutamine-rich tetratricopeptide repeat-containing protein alpha (SGTA) from Homo sapiens (Human).